The chain runs to 361 residues: Phospho-N-acetylmuramoyl-pentapeptide-transferase (361 aa).

The next 10 membrane-spanning stretches (helical) occupy residues 25-45 (TGGA…WIID), 72-92 (TPTM…VLWA), 95-115 (LNPY…VGFY), 135-155 (LLIE…LGRA), 169-189 (VMLN…VGAG), 200-220 (GLAI…SYLA), 240-260 (LAVL…FNAP), 264-284 (IFMG…IAVA), 289-309 (IVLA…IVQV), and 338-358 (QIVI…LSTL).

It belongs to the glycosyltransferase 4 family. MraY subfamily. Mg(2+) serves as cofactor.

It localises to the cell inner membrane. The enzyme catalyses UDP-N-acetyl-alpha-D-muramoyl-L-alanyl-gamma-D-glutamyl-meso-2,6-diaminopimeloyl-D-alanyl-D-alanine + di-trans,octa-cis-undecaprenyl phosphate = di-trans,octa-cis-undecaprenyl diphospho-N-acetyl-alpha-D-muramoyl-L-alanyl-D-glutamyl-meso-2,6-diaminopimeloyl-D-alanyl-D-alanine + UMP. Its pathway is cell wall biogenesis; peptidoglycan biosynthesis. Catalyzes the initial step of the lipid cycle reactions in the biosynthesis of the cell wall peptidoglycan: transfers peptidoglycan precursor phospho-MurNAc-pentapeptide from UDP-MurNAc-pentapeptide onto the lipid carrier undecaprenyl phosphate, yielding undecaprenyl-pyrophosphoryl-MurNAc-pentapeptide, known as lipid I. This chain is Phospho-N-acetylmuramoyl-pentapeptide-transferase, found in Rhodopseudomonas palustris (strain TIE-1).